Consider the following 260-residue polypeptide: MIIVLSPAKSLDYETPPHVSHHTLPQFADDAAALIDELRRLSPQQIGTLMSISDPLARLNFQRYADWSRTSTPANAKQAVLAFNGDVYEGLDARSLSPDDLDYAQRHVRVLSGLYGLLRPLDLLQPYRLEMGTRFTNARGKDLYAFWGERITHALNAELKTREGASRVLVNCASAEYFKSVKPKLLDARVVTPVFEDWKDGRYKIISFHAKRARGLMARYVVEGRIGSPDVLKDFASEGYAFDEAASNDDTFVFRRRAGA.

Belongs to the UPF0246 family.

The protein is UPF0246 protein BTH_I1090 of Burkholderia thailandensis (strain ATCC 700388 / DSM 13276 / CCUG 48851 / CIP 106301 / E264).